Reading from the N-terminus, the 91-residue chain is Small ribosomal subunit protein bS20 (91 aa).

2 disordered regions span residues 1–26 and 67–91; these read MALR…RSRK and HKNA…AQQS.

It belongs to the bacterial ribosomal protein bS20 family.

Binds directly to 16S ribosomal RNA. In Deinococcus deserti (strain DSM 17065 / CIP 109153 / LMG 22923 / VCD115), this protein is Small ribosomal subunit protein bS20.